The primary structure comprises 105 residues: MISSKFGIGQQVRHKLLGYLGVIIDVDPEYSLEKPSLEEISADDSLRRSPWYYVVMEDEDGKPVHTYLAEAQLGYEISPVHPEQPKLDELSASIKKQLKTPRLRN.

A disordered region spans residues 84-105 (QPKLDELSASIKKQLKTPRLRN). Basic residues predominate over residues 96 to 105 (KQLKTPRLRN).

Belongs to the HspQ family.

The protein resides in the cytoplasm. Its function is as follows. Involved in the degradation of certain denaturated proteins, including DnaA, during heat shock stress. This chain is Heat shock protein HspQ, found in Wigglesworthia glossinidia brevipalpis.